The sequence spans 260 residues: Indole-3-glycerol phosphate synthase (260 aa).

Belongs to the TrpC family.

It catalyses the reaction 1-(2-carboxyphenylamino)-1-deoxy-D-ribulose 5-phosphate + H(+) = (1S,2R)-1-C-(indol-3-yl)glycerol 3-phosphate + CO2 + H2O. Its pathway is amino-acid biosynthesis; L-tryptophan biosynthesis; L-tryptophan from chorismate: step 4/5. This is Indole-3-glycerol phosphate synthase (trpC) from Lacticaseibacillus casei (Lactobacillus casei).